An 84-amino-acid chain; its full sequence is Small nuclear ribonucleoprotein E (84 aa).

The region spanning 13–84 (INFIFKLLQQ…GDNITLIQAI (72 aa)) is the Sm domain.

This sequence belongs to the snRNP Sm proteins family. In terms of assembly, component of the Sm core complex, present in spliceosomal snRNP U1, U2, U4/U6 and U5. The core complex contains smb1, smd1, smd2, smd3, sme1, smf1 and smg1 (Sm proteins B, D1, D2, D3, E, F and G, respectively), and is probably a heptameric ring structure.

It localises to the cytoplasm. It is found in the nucleus. Its function is as follows. Involved in pre-mRNA splicing. Binds and is required for the stability of snRNA U1, U2, U4 and U5 which contain a highly conserved structural motif called the Sm binding site. Involved in cap modification. This Schizosaccharomyces pombe (strain 972 / ATCC 24843) (Fission yeast) protein is Small nuclear ribonucleoprotein E.